A 671-amino-acid polypeptide reads, in one-letter code: UBA domain-containing protein RUP1 (671 aa).

One can recognise a UBA domain in the interval 1–41 (MMDNQAVKSLLEMGIPHEVAVDALQRTGGNLEAAVNFIFSN). Ser56 carries the phosphoserine modification. The tract at residues 68-87 (GTKPCDVPNNGDQDIDMPDV) is disordered. Positions 432-501 (SKRKQARTRS…LNSARAAKME (70 aa)) form a coiled coil. Residues 643–671 (DGMGDPEQATNNINNGNDNDNDDDIDSDN) form a disordered region. Residues 661 to 671 (NDNDDDIDSDN) show a composition bias toward acidic residues.

In terms of assembly, forms a ternary complex with RSP5 and UBP2.

The protein resides in the cytoplasm. The protein localises to the nucleus. Functionally, modulates the activity of the RSP5 HECT ubiquitin-protein ligase through its mediation of the interaction between RSP5 and the deubiquitinase UBP2. Involved in regulation of cell wall homeostasis. The chain is UBA domain-containing protein RUP1 (RUP1) from Saccharomyces cerevisiae (strain ATCC 204508 / S288c) (Baker's yeast).